The following is a 76-amino-acid chain: MSVEEKISKIIMDQLGVSAEEVKPEASFVEDLGADSLDLTELIMAMEEEFGIEIDDDDAQKILKVQDAIAYIKNKQ.

The region spanning 1 to 76 is the Carrier domain; the sequence is MSVEEKISKI…DAIAYIKNKQ (76 aa). An O-(pantetheine 4'-phosphoryl)serine modification is found at Ser36.

Belongs to the acyl carrier protein (ACP) family. Post-translationally, 4'-phosphopantetheine is transferred from CoA to a specific serine of apo-ACP by AcpS. This modification is essential for activity because fatty acids are bound in thioester linkage to the sulfhydryl of the prosthetic group.

The protein resides in the cytoplasm. The protein operates within lipid metabolism; fatty acid biosynthesis. Its function is as follows. Carrier of the growing fatty acid chain in fatty acid biosynthesis. The sequence is that of Acyl carrier protein from Nitratidesulfovibrio vulgaris (strain DSM 19637 / Miyazaki F) (Desulfovibrio vulgaris).